The primary structure comprises 123 residues: Small ribosomal subunit protein uS12 (123 aa).

Position 89 is a 3-methylthioaspartic acid (aspartate 89). Residues 100–123 (GSLDTSGVKDRKQGRSKYGAKRPK) form a disordered region. Over residues 113 to 123 (GRSKYGAKRPK) the composition is skewed to basic residues.

Belongs to the universal ribosomal protein uS12 family. In terms of assembly, part of the 30S ribosomal subunit. Contacts proteins S8 and S17. May interact with IF1 in the 30S initiation complex.

In terms of biological role, with S4 and S5 plays an important role in translational accuracy. Functionally, interacts with and stabilizes bases of the 16S rRNA that are involved in tRNA selection in the A site and with the mRNA backbone. Located at the interface of the 30S and 50S subunits, it traverses the body of the 30S subunit contacting proteins on the other side and probably holding the rRNA structure together. The combined cluster of proteins S8, S12 and S17 appears to hold together the shoulder and platform of the 30S subunit. The protein is Small ribosomal subunit protein uS12 of Pseudomonas aeruginosa (strain LESB58).